Reading from the N-terminus, the 656-residue chain is UV-damage endonuclease (656 aa).

Disordered regions lie at residues 1–82, 119–146, 175–194, 241–264, 492–515, 550–620, and 636–656; these read MPSR…GKEQ, PSVVSRFPTAPYHHKSTNAEEREAKEPV, IIEPEDAQDAAERGAARPPA, PLQFEDEPEHHLKNKPDKSKEPQD, EPCDGAVTPRDRRKHRPRVMTLPP, DMVP…GPYN, and KREVKKGKVPEEVEDEGEFDG. A compositionally biased stretch (low complexity) spans 13-32; the sequence is TPQSESSTFSSTLDSSAPSP. 2 stretches are compositionally biased toward basic and acidic residues: residues 48–82 and 135–146; these read SEKDRDHEKRSGEELAGRMMGKDANGHCLREGKEQ and TNAEEREAKEPV. Basic and acidic residues predominate over residues 550-561; that stretch reads DMVPYDRDDENR. Residues 568–579 are compositionally biased toward basic residues; it reads APKKKKGGKRKR. Residues 583 to 595 show a composition bias toward acidic residues; the sequence is EEAAEPEEVDTAA. Basic and acidic residues predominate over residues 596 to 614; it reads DDVKDAPEGPKEVPEEERA. Acidic residues predominate over residues 647–656; sequence EVEDEGEFDG.

It belongs to the uve1/UvsE family. Mg(2+) is required as a cofactor.

Functionally, endonuclease for the repair of UV-irradiated DNA. Involved in the excision of cyclobutane pyrimidine dimers (CPD) and 6-4 pyrimidine pyrimidones (6-4PP) which forms the UV damage repair (UVDR) pathway. This chain is UV-damage endonuclease (mus-18), found in Neurospora crassa (strain ATCC 24698 / 74-OR23-1A / CBS 708.71 / DSM 1257 / FGSC 987).